The sequence spans 405 residues: Tyrosine--tRNA ligase (405 aa).

The 'HIGH' region signature appears at 46–55; that stretch reads PTRPDIHLGH. Positions 230–234 match the 'KMSKS' region motif; sequence KMSKS. Lys233 contributes to the ATP binding site. One can recognise an S4 RNA-binding domain in the interval 341–404; it reads MGLAALMVKA…GKKKFVKIVV (64 aa).

The protein belongs to the class-I aminoacyl-tRNA synthetase family. TyrS type 2 subfamily. In terms of assembly, homodimer.

It is found in the cytoplasm. The enzyme catalyses tRNA(Tyr) + L-tyrosine + ATP = L-tyrosyl-tRNA(Tyr) + AMP + diphosphate + H(+). Functionally, catalyzes the attachment of tyrosine to tRNA(Tyr) in a two-step reaction: tyrosine is first activated by ATP to form Tyr-AMP and then transferred to the acceptor end of tRNA(Tyr). The polypeptide is Tyrosine--tRNA ligase (Bdellovibrio bacteriovorus (strain ATCC 15356 / DSM 50701 / NCIMB 9529 / HD100)).